The sequence spans 163 residues: tRNA-acetylating toxin 2 (163 aa).

The acetyl-CoA site is built by Leu-89, Val-91, His-96, Gly-97, Gln-98, Gly-99, Ala-101, Arg-102, and Glu-132. Tyr-137 is a catalytic residue. Arg-139 lines the acetyl-CoA pocket.

It belongs to the acetyltransferase family. GNAT subfamily. In terms of assembly, homodimer (in absence of antitoxin). Forms a complex with cognate antitoxin TacA2. Forms a 4:2 antitoxin:toxin complex with cognate antitoxin TacA2.

The enzyme catalyses glycyl-tRNA(Gly) + acetyl-CoA = N-acetylglycyl-tRNA(Gly) + CoA + H(+). Functionally, toxic component of a type II toxin-antitoxin (TA) system. Acetylates tRNA and inhibits translation. Acetylates exclusively Gly in situ. Overexpression during the lag phase of a tacA2-tacT2 deletion strain leads to very small increase in persister cells in the presence of cefotaxime but no detectable growth phenotype in absence of antibiotics. Compared to a protein with a single amino acid change (TacT2 from S.enterica NCTC 13349, Glu-29 is Lys in NCTC 13349) this protein binds tRNA very poorly and acetylates tRNA very poorly. Persister cell formation is neutralized by cognate antitoxin TacA2. Neutralized only by cognate antitoxin TacA2 (A8), but not by TacA1 or TacA3. Plays a role in persister cell formation. In terms of biological role, the TacA2-TacT2 complex both represses and derepresses expression of its own operon. This Salmonella typhimurium (strain 14028s / SGSC 2262) protein is tRNA-acetylating toxin 2.